A 25-amino-acid polypeptide reads, in one-letter code: SPbeta prophage-derived uncharacterized protein YotF (25 aa).

This is SPbeta prophage-derived uncharacterized protein YotF (yotF) from Bacillus subtilis (strain 168).